The following is a 319-amino-acid chain: Putative antiporter CaxA (319 aa).

The next 10 helical transmembrane spans lie at 3 to 23, 38 to 58, 81 to 101, 105 to 125, 127 to 147, 175 to 195, 208 to 228, 250 to 270, 275 to 292, and 297 to 317; these read VATIFVLVGLVLLIWSADRFV, MIIGLTIVAMGSSAPEIMVSA, ILLVIGATALLKPIAVASMTI, FPLLILVTLLGYLFLADQSLT, AEGALFLGGFVLFLVLMVYWG, VWLVLGLALLLASSQLLVHGA, LIGLTIIAIGTSLPELAASLI, ILAVLGVGTIIAPGVIDAAAA, YVMMAATLALLLMSLRLG, and INRVEGCILLMAFIGYQYLLF.

It belongs to the Ca(2+):cation antiporter (CaCA) (TC 2.A.19) family.

The protein localises to the cell membrane. Functionally, confers modest Ca(2+) and Na(+) resistance. This Alkalimonas amylolytica protein is Putative antiporter CaxA (caxA).